The following is a 481-amino-acid chain: ATP synthase subunit beta (481 aa).

160 to 167 contacts ATP; it reads GGAGVGKT.

The protein belongs to the ATPase alpha/beta chains family. In terms of assembly, F-type ATPases have 2 components, CF(1) - the catalytic core - and CF(0) - the membrane proton channel. CF(1) has five subunits: alpha(3), beta(3), gamma(1), delta(1), epsilon(1). CF(0) has three main subunits: a(1), b(2) and c(9-12). The alpha and beta chains form an alternating ring which encloses part of the gamma chain. CF(1) is attached to CF(0) by a central stalk formed by the gamma and epsilon chains, while a peripheral stalk is formed by the delta and b chains.

The protein resides in the cell inner membrane. The enzyme catalyses ATP + H2O + 4 H(+)(in) = ADP + phosphate + 5 H(+)(out). Produces ATP from ADP in the presence of a proton gradient across the membrane. The catalytic sites are hosted primarily by the beta subunits. The sequence is that of ATP synthase subunit beta from Stigmatella aurantiaca.